The sequence spans 101 residues: MQPRMLLIVALVALLASARADEGEGSLLLGSMQGYMEQASKTVQDALSSMQESDIAVVASRGWMDNRFKSLKGYWSKFTDKFTGLWESGPEDQLTTPTLEP.

A signal peptide spans 1–20; that stretch reads MQPRMLLIVALVALLASARA. Met64 is subject to Methionine sulfoxide. Residues 69-101 are lipid-binding; that stretch reads KSLKGYWSKFTDKFTGLWESGPEDQLTTPTLEP. Thr96 carries an O-linked (GalNAc...) threonine glycan.

It belongs to the apolipoprotein C3 family. In terms of processing, the most abundant glycoforms are characterized by an O-linked disaccharide galactose linked to N-acetylgalactosamine (Gal-GalNAc), further modified with up to 3 sialic acid residues. Less abundant glycoforms are characterized by more complex and fucosylated glycan moieties. O-glycosylated on Thr-96 with a core 1 or possibly core 8 glycan. As to expression, synthesized predominantly in liver and to a lesser degree in intestine.

It is found in the secreted. Functionally, component of triglyceride-rich very low density lipoproteins (VLDL) and high density lipoproteins (HDL) in plasma. Plays a multifaceted role in triglyceride homeostasis. Intracellularly, promotes hepatic very low density lipoprotein 1 (VLDL1) assembly and secretion; extracellularly, attenuates hydrolysis and clearance of triglyceride-rich lipoproteins (TRLs). Impairs the lipolysis of TRLs by inhibiting lipoprotein lipase and the hepatic uptake of TRLs by remnant receptors. Formed of several curved helices connected via semiflexible hinges, so that it can wrap tightly around the curved micelle surface and easily adapt to the different diameters of its natural binding partners. The protein is Apolipoprotein C-III (Apoc3) of Rattus norvegicus (Rat).